The chain runs to 130 residues: L-aspartate semialdehyde sulfurtransferase iron-sulfur subunit (130 aa).

2 4Fe-4S ferredoxin-type domains span residues 72 to 101 (RPIHRDEEECVECGACISVCPMNVYSFDET) and 102 to 130 (WSLCVDEKKCIQCGMCIKMCPHGALKLGE). 8 residues coordinate [4Fe-4S] cluster: cysteine 81, cysteine 84, cysteine 87, cysteine 91, cysteine 111, cysteine 114, cysteine 117, and cysteine 121.

In terms of assembly, may form a complex with MA_1821. [4Fe-4S] cluster is required as a cofactor.

It functions in the pathway amino-acid biosynthesis. In terms of biological role, required for O-acetylhomoserine sulfhydrylase (OAHS)-independent homocysteine (Hcy) biosynthesis. Together with MA_1821, catalyzes the condensation of sulfide with aspartate semialdehyde to generate homocysteine. May be involved in the reduction of the disulfide formed in MA_1821. The sequence is that of L-aspartate semialdehyde sulfurtransferase iron-sulfur subunit from Methanosarcina acetivorans (strain ATCC 35395 / DSM 2834 / JCM 12185 / C2A).